The following is a 365-amino-acid chain: DNA replication and repair protein RecF (365 aa).

30–37 (GRNAQGKT) provides a ligand contact to ATP.

Belongs to the RecF family.

The protein resides in the cytoplasm. In terms of biological role, the RecF protein is involved in DNA metabolism; it is required for DNA replication and normal SOS inducibility. RecF binds preferentially to single-stranded, linear DNA. It also seems to bind ATP. The chain is DNA replication and repair protein RecF from Streptococcus pneumoniae serotype 4 (strain ATCC BAA-334 / TIGR4).